The chain runs to 718 residues: Amino-acid acetyltransferase, mitochondrial (718 aa).

Residues 1-36 (MNPNAVWPRTAQSSLKKHQVSLCTCQRRSHYRLRSF) constitute a mitochondrion transit peptide. Residues 97-116 (QHQPDLPQKPTSAPASTAKI) form a disordered region. The N-acetyltransferase domain maps to 539-708 (RQPRLRLDDP…YEAVCRSIQP (170 aa)).

It belongs to the acetyltransferase family.

Its subcellular location is the mitochondrion. The enzyme catalyses L-glutamate + acetyl-CoA = N-acetyl-L-glutamate + CoA + H(+). It functions in the pathway amino-acid biosynthesis; L-arginine biosynthesis; N(2)-acetyl-L-ornithine from L-glutamate: step 1/4. Functionally, N-acetylglutamate synthase involved in arginine biosynthesis. The polypeptide is Amino-acid acetyltransferase, mitochondrial (arg2) (Aspergillus clavatus (strain ATCC 1007 / CBS 513.65 / DSM 816 / NCTC 3887 / NRRL 1 / QM 1276 / 107)).